A 291-amino-acid chain; its full sequence is MNNEHAEVMEMHMPTEKIVGQTDLYSIKSSTVRTPDAMPRPIRVKAREVNVFYGSKQALFDVSIDVPERAVTAFIGPSGCGKSTFLRCFNRMNDTIEGSKVTGRIELDGADIYDGSIDVVELRARIGMVFQKPNPFPKSIYENVAYGPRIHGLASAKGDLDRIVETSLQKAGLWNEVKDRLHEPGTGLSGGQQQRLCIARAIAVSPEVILMDEPCSALDPIATAKVEELIDELRENYTIVIVTHSMQQAARVSQRTAMFHLGYLVEEGPTDKMFTNPEEKRTQDYITGRFG.

Residues 44–286 enclose the ABC transporter domain; that stretch reads VKAREVNVFY…PEEKRTQDYI (243 aa). Position 76–83 (76–83) interacts with ATP; it reads GPSGCGKS.

Belongs to the ABC transporter superfamily. Phosphate importer (TC 3.A.1.7) family. As to quaternary structure, the complex is composed of two ATP-binding proteins (PstB), two transmembrane proteins (PstC and PstA) and a solute-binding protein (PstS).

The protein resides in the cell inner membrane. The catalysed reaction is phosphate(out) + ATP + H2O = ADP + 2 phosphate(in) + H(+). Functionally, part of the ABC transporter complex PstSACB involved in phosphate import. Responsible for energy coupling to the transport system. The polypeptide is Phosphate import ATP-binding protein PstB (Chelativorans sp. (strain BNC1)).